A 174-amino-acid chain; its full sequence is UPF0340 protein MW2038 (174 aa).

This sequence belongs to the UPF0340 family.

The sequence is that of UPF0340 protein MW2038 from Staphylococcus aureus (strain MW2).